Consider the following 190-residue polypeptide: COMM domain-containing protein 1 (190 aa).

Ala2 is modified (N-acetylalanine). A sufficient for interaction with SLC12A2 region spans residues Ala2–Ser123. Cu cation contacts are provided by His101, Met110, and His134. One can recognise a COMM domain in the interval Gly118–Ile186. Residues Arg125–Asn190 are required for binding to PtdIns(4,5)P2.

The protein belongs to the COMM domain-containing protein 1 family. Component of the commander complex consisting of the CCC subcomplex and the retriever subcomplex. Component of the CCC (COMMD/CCDC22/CCDC93) subcomplex consisting of COMMD1, COMMD2, COMMD3, COMMD4, COMMD5, COMMD6, COMMD7, COMMD8, COMMD9, COMMD10, CCDC22 and CCDC93; within the complex forms a heterodimer with COMMD6. Interacts with VPS35L; the interaction associates the CCC complex with the retriever complex. Identified in a complex with an E3 ubiquitin ligase complex composed of TCEB1/elongin C, CUL2, SOCS1 and RBX1; in the complex interacts directly with SOCS1 and CUL2. Identified in a complex with NF-kappa-B. Interacts directly with SLC12A2. Interacts directly with ATP7B (via the N-terminal region). Interacts with ATP7A. Interacts with FAM107A; this interaction stabilizes COMMD1 in the nucleus. Interacts with CCS, CDKN2A, RELA, REL, RELB, NFKB1/p105, NFKB2/p100, NFKBIB, SCNN1D, SCNN1B, CFTR, CLU, SGK1, AKT1, CUL1, CUL2, CUL3, CUL4A, CUL4B, CUL5, CUL7, HIF1A. Acetylated by EP300 ina stimuli-specific manner; protecting it from XIAP-mediated proteasomal degradation and required for interaction with RElA in response to stress. In terms of processing, ubiquitinated; undergoes both 'Lys-63'- and 'Lys-48'-linked polyubiquitination. Ubiquitinated by XIAP, leading to its proteasomal degradation. In terms of tissue distribution, ubiquitous. Highest expression in the liver, with lower expression in brain, lung, placenta, pancreas, small intestine, heart, skeletal muscle, kidney and placenta. Down-regulated in cancer tissues.

The protein localises to the nucleus. It localises to the cytoplasm. It is found in the endosome membrane. The protein resides in the cytoplasmic vesicle. Its subcellular location is the early endosome. The protein localises to the recycling endosome. Functionally, scaffold protein in the commander complex that is essential for endosomal recycling of transmembrane cargos; the commander complex is composed of the CCC subcomplex and the retriever subcomplex. Can modulate activity of cullin-RING E3 ubiquitin ligase (CRL) complexes by displacing CAND1; in vitro promotes CRL E3 activity and dissociates CAND1 from CUL1 and CUL2. Promotes ubiquitination of NF-kappa-B subunit RELA and its subsequent proteasomal degradation. Down-regulates NF-kappa-B activity. Involved in the regulation of membrane expression and ubiquitination of SLC12A2. Modulates Na(+) transport in epithelial cells by regulation of apical cell surface expression of amiloride-sensitive sodium channel (ENaC) subunits and by promoting their ubiquitination presumably involving NEDD4L. Promotes the localization of SCNN1D to recycling endosomes. Promotes CFTR cell surface expression through regulation of its ubiquitination. Down-regulates SOD1 activity by interfering with its homodimerization. Plays a role in copper ion homeostasis. Involved in copper-dependent ATP7A trafficking between the trans-Golgi network and vesicles in the cell periphery; the function is proposed to depend on its association within the CCC complex and cooperation with the WASH complex on early endosomes. Can bind one copper ion per monomer. May function to facilitate biliary copper excretion within hepatocytes. Binds to phosphatidylinositol 4,5-bisphosphate (PtdIns(4,5)P2). Involved in the regulation of HIF1A-mediated transcription; competes with ARNT/Hif-1-beta for binding to HIF1A resulting in decreased DNA binding and impaired transcriptional activation by HIF-1. Negatively regulates neuroblastoma G1/S phase cell cycle progression and cell proliferation by stimulating ubiquitination of NF-kappa-B subunit RELA and NF-kappa-B degradation in a FAM107A- and actin-dependent manner. This is COMM domain-containing protein 1 (COMMD1) from Homo sapiens (Human).